A 314-amino-acid chain; its full sequence is Ferrochelatase (314 aa).

Positions 184 and 259 each coordinate Fe cation.

Belongs to the ferrochelatase family.

Its subcellular location is the cytoplasm. The catalysed reaction is heme b + 2 H(+) = protoporphyrin IX + Fe(2+). Its pathway is porphyrin-containing compound metabolism; protoheme biosynthesis; protoheme from protoporphyrin-IX: step 1/1. In terms of biological role, catalyzes the ferrous insertion into protoporphyrin IX. This is Ferrochelatase from Chlamydia trachomatis serovar A (strain ATCC VR-571B / DSM 19440 / HAR-13).